Consider the following 377-residue polypeptide: Succinyl-diaminopimelate desuccinylase (377 aa).

Residue histidine 66 coordinates Zn(2+). Aspartate 68 is a catalytic residue. Residue aspartate 99 coordinates Zn(2+). Glutamate 133 acts as the Proton acceptor in catalysis. Residues glutamate 134, glutamate 162, and histidine 348 each coordinate Zn(2+).

The protein belongs to the peptidase M20A family. DapE subfamily. As to quaternary structure, homodimer. Zn(2+) serves as cofactor. The cofactor is Co(2+).

It carries out the reaction N-succinyl-(2S,6S)-2,6-diaminopimelate + H2O = (2S,6S)-2,6-diaminopimelate + succinate. The protein operates within amino-acid biosynthesis; L-lysine biosynthesis via DAP pathway; LL-2,6-diaminopimelate from (S)-tetrahydrodipicolinate (succinylase route): step 3/3. In terms of biological role, catalyzes the hydrolysis of N-succinyl-L,L-diaminopimelic acid (SDAP), forming succinate and LL-2,6-diaminopimelate (DAP), an intermediate involved in the bacterial biosynthesis of lysine and meso-diaminopimelic acid, an essential component of bacterial cell walls. In Chromobacterium violaceum (strain ATCC 12472 / DSM 30191 / JCM 1249 / CCUG 213 / NBRC 12614 / NCIMB 9131 / NCTC 9757 / MK), this protein is Succinyl-diaminopimelate desuccinylase.